We begin with the raw amino-acid sequence, 162 residues long: Nascent polypeptide-associated complex subunit beta (162 aa).

Disordered regions lie at residues 1 to 39 (MPVD…NISE) and 130 to 162 (EQAK…DNVE). A compositionally biased stretch (basic residues) spans 24-33 (TPRRPGKKVA). The region spanning 38 to 103 (SEDEKKLSAT…SQQKDIAELI (66 aa)) is the NAC-A/B domain. Residues 146–162 (GDDEIPNLVENFEDNVE) are compositionally biased toward acidic residues.

The protein belongs to the NAC-beta family. As to quaternary structure, part of the nascent polypeptide-associated complex (NAC), consisting of EGD2 and EGD1. NAC associates with ribosomes via EGD1.

It localises to the cytoplasm. The protein resides in the nucleus. Its function is as follows. Component of the nascent polypeptide-associated complex (NAC), a dynamic component of the ribosomal exit tunnel, protecting the emerging polypeptides from interaction with other cytoplasmic proteins to ensure appropriate nascent protein targeting. The NAC complex also promotes mitochondrial protein import by enhancing productive ribosome interactions with the outer mitochondrial membrane and blocks the inappropriate interaction of ribosomes translating non-secretory nascent polypeptides with translocation sites in the membrane of the endoplasmic reticulum. EGD1 may act as a transcription factor that exert a negative effect on the expression of several genes that are transcribed by RNA polymerase II. The protein is Nascent polypeptide-associated complex subunit beta (EGD1) of Yarrowia lipolytica (strain CLIB 122 / E 150) (Yeast).